Reading from the N-terminus, the 253-residue chain is Small ribosomal subunit protein uS2 (253 aa).

The protein belongs to the universal ribosomal protein uS2 family.

In Cereibacter sphaeroides (strain ATCC 17023 / DSM 158 / JCM 6121 / CCUG 31486 / LMG 2827 / NBRC 12203 / NCIMB 8253 / ATH 2.4.1.) (Rhodobacter sphaeroides), this protein is Small ribosomal subunit protein uS2.